Consider the following 375-residue polypeptide: Beta sliding clamp (375 aa).

The protein belongs to the beta sliding clamp family. Forms a ring-shaped head-to-tail homodimer around DNA which binds and tethers DNA polymerases and other proteins to the DNA. The DNA replisome complex has a single clamp-loading complex (3 tau and 1 each of delta, delta', psi and chi subunits) which binds 3 Pol III cores (1 core on the leading strand and 2 on the lagging strand) each with a beta sliding clamp dimer. Additional proteins in the replisome are other copies of gamma, psi and chi, Ssb, DNA helicase and RNA primase.

It localises to the cytoplasm. Its function is as follows. Confers DNA tethering and processivity to DNA polymerases and other proteins. Acts as a clamp, forming a ring around DNA (a reaction catalyzed by the clamp-loading complex) which diffuses in an ATP-independent manner freely and bidirectionally along dsDNA. Initially characterized for its ability to contact the catalytic subunit of DNA polymerase III (Pol III), a complex, multichain enzyme responsible for most of the replicative synthesis in bacteria; Pol III exhibits 3'-5' exonuclease proofreading activity. The beta chain is required for initiation of replication as well as for processivity of DNA replication. This Synechococcus elongatus (strain ATCC 33912 / PCC 7942 / FACHB-805) (Anacystis nidulans R2) protein is Beta sliding clamp (dnaN).